The following is a 334-amino-acid chain: Probable tRNA pseudouridine synthase B (334 aa).

Residue aspartate 82 is the Nucleophile of the active site. Residues 250–325 enclose the PUA domain; that stretch reads LPKVWIRDSA…IAVDVDKVFM (76 aa).

Belongs to the pseudouridine synthase TruB family. Type 2 subfamily.

It catalyses the reaction uridine(55) in tRNA = pseudouridine(55) in tRNA. Its function is as follows. Could be responsible for synthesis of pseudouridine from uracil-55 in the psi GC loop of transfer RNAs. This is Probable tRNA pseudouridine synthase B from Thermococcus onnurineus (strain NA1).